We begin with the raw amino-acid sequence, 140 residues long: Lymphocyte antigen 6H (140 aa).

The first 25 residues, 1 to 25 (MLPAAMKGLGLALLAVLLCSAPAHG), serve as a signal peptide directing secretion. The region spanning 26–91 (LWCQDCTLTT…RHFFSDYLMG (66 aa)) is the UPAR/Ly6 domain. 5 disulfides stabilise this stretch: cysteine 28-cysteine 52, cysteine 31-cysteine 40, cysteine 45-cysteine 73, cysteine 77-cysteine 104, and cysteine 105-cysteine 110. Residue asparagine 36 is glycosylated (N-linked (GlcNAc...) asparagine). Glycine 115 carries the GPI-anchor amidated glycine lipid modification. The propeptide at 116-140 (AGHSPWALAGGLLLSLGPALLWAGP) is removed in mature form.

Interacts with CHRNA4 and CHRNA7. As to expression, highly expressed in brain (cerebral cortex, amygdala, hippocampus and subthalamic nucleus) and in acute human leukemic cell line MOLT-3. Also found in lower levels in testis, pancreas, small intestine and colon.

The protein localises to the cell membrane. Functionally, believed to act as a modulator of nicotinic acetylcholine receptors (nAChRs) activity. In vitro inhibits alpha-3:beta-4-containing nAChRs maximum response. May play a role in the intracellular trafficking of alpha-7-containing nAChRs and may inhibit their expression at the cell surface. Seems to inhibit alpha-7/CHRNA7 signaling in hippocampal neurons. The sequence is that of Lymphocyte antigen 6H (LY6H) from Homo sapiens (Human).